The sequence spans 228 residues: MSKIVLEAKDVYKHFTDGKSTVEVIKGLSLKIAAGEFVSIVGASGSGKSTLLHILGGLDQPTQGQVFLNEQRFDNLGEAERGFKRNQYLGFVYQFHHLLPEFSALENVAMPLMLRADTNYKEVKQQAEHLLDRVGLSHRLTHKPGELSGGERQRVALARALVARPAVMLADEPTGNLDRKTAFGIFELLSDLKQEFNMAMLIVTHDEQLAQSADSILHMQDGLWVDHS.

One can recognise an ABC transporter domain in the interval 6 to 225 (LEAKDVYKHF…ILHMQDGLWV (220 aa)). Residue 42–49 (GASGSGKS) participates in ATP binding.

The protein belongs to the ABC transporter superfamily. Lipoprotein translocase (TC 3.A.1.125) family. As to quaternary structure, the complex is composed of two ATP-binding proteins (LolD) and two transmembrane proteins (LolC and LolE).

The protein localises to the cell inner membrane. Part of the ABC transporter complex LolCDE involved in the translocation of mature outer membrane-directed lipoproteins, from the inner membrane to the periplasmic chaperone, LolA. Responsible for the formation of the LolA-lipoprotein complex in an ATP-dependent manner. The chain is Lipoprotein-releasing system ATP-binding protein LolD from Acinetobacter baylyi (strain ATCC 33305 / BD413 / ADP1).